Here is a 554-residue protein sequence, read N- to C-terminus: (E)-beta-caryophyllene synthase (554 aa).

Positions 313 and 317 each coordinate Mn(2+). A DDXXD motif motif is present at residues 313-317 (DDTYD). Homodimerization stretches follow at residues 319 to 325 (YGTLDEL) and 391 to 427 (EAQWFFSKYKPTMQEYMKVALLSSGYMMMTINSLAVI). Positions 457 and 465 each coordinate Mn(2+).

This sequence belongs to the terpene synthase family. In terms of assembly, homodimer. It depends on Mn(2+) as a cofactor. Mg(2+) is required as a cofactor. As to expression, expressed in peltate glandular trichomes. Present at low levels in flowers, leaves and stems.

The enzyme catalyses (2E,6E)-farnesyl diphosphate = (-)-(E)-beta-caryophyllene + diphosphate. It carries out the reaction (2E,6E)-farnesyl diphosphate = alpha-humulene + diphosphate. The protein operates within secondary metabolite biosynthesis; terpenoid biosynthesis. Involved in the biosynthesis of phenolic sesquiterpenes natural products. Sesquiterpene synthase converting (2E,6E)-farnesyl diphosphate (FPP) to (E)-beta-caryophyllene and alpha-humulene. This Origanum vulgare (Wild marjoram) protein is (E)-beta-caryophyllene synthase.